Reading from the N-terminus, the 693-residue chain is CREB-regulated transcription coactivator 2 (693 aa).

A compositionally biased stretch (polar residues) spans 1 to 20; it reads MATSGANGPGSATASASNPR. The interval 1–30 is disordered; that stretch reads MATSGANGPGSATASASNPRKFSEKIALQK. At alanine 2 the chain carries N-acetylalanine. Residue arginine 51 is modified to Asymmetric dimethylarginine; by PRMT6. Phosphoserine is present on residues serine 70, serine 86, and serine 90. Residues arginine 99, arginine 120, and arginine 123 each carry the asymmetric dimethylarginine; by PRMT6 modification. The residue at position 136 (serine 136) is a Phosphoserine. Asymmetric dimethylarginine; by PRMT6 occurs at positions 161 and 168. At threonine 169 the chain carries Phosphothreonine. At serine 171 the chain carries Phosphoserine. The span at 174-188 shows a compositional bias: polar residues; the sequence is ALHTSVMNPSPQDTY. The disordered stretch occupies residues 174-210; sequence ALHTSVMNPSPQDTYPSPAAPSVLPSRRGGCLDGETD. The interval 209-215 is required for interaction with COP1; it reads TDSKVPA. Lysine 234 is covalently cross-linked (Glycyl lysine isopeptide (Lys-Gly) (interchain with G-Cter in SUMO2)). A Nuclear export signal motif is present at residues 271-287; it reads TGGSLPDLTNLHFPPPL. 3 disordered regions span residues 271-307, 335-463, and 476-548; these read TGGSLPDLTNLHFPPPLPTPLDPEETAYPSLSGGSST, HSPL…SPTL, and KLPT…QSYH. A Phosphoserine; by MARK2 modification is found at serine 274. Phosphoserine is present on serine 306. A compositionally biased stretch (polar residues) spans 339 to 351; that stretch reads SHPSFQSSLSNPN. Low complexity-rich tracts occupy residues 352–378 and 386–424; these read LQASLSSPQPQLQGSHSHPSLPASSLA and SLGHPSLSAPALSSSSSSSSASSPVLGAPAYPASAPGAS. A phosphoserine mark is found at serine 368, serine 393, serine 433, and serine 456. Over residues 447–463 the composition is skewed to polar residues; sequence SQQQLPKQFSPTMSPTL. Tyrosine 488 is modified (phosphotyrosine). 2 positions are modified to phosphoserine: serine 489 and serine 492. Position 501 is a phosphothreonine (threonine 501). 2 positions are modified to phosphoserine: serine 613 and serine 624.

It belongs to the TORC family. Binds, as a tetramer, through its N-terminal region, with the bZIP domain of CREB1. 'Arg-314' in the bZIP domain of CREB1 is essential for this interaction. Interaction, via its C-terminal, with TAF4, enhances recruitment of TAF4 to CREB1. Interacts with SIK2. Interacts with 14-3-3 proteins, YWHAB and YWHAG. Interacts (probably when phosphorylated at Ser-171) with YWHAE. Interacts with calmodulin-dependent catalytic subunit PPP3CA/calcineurin A. Interaction with COP1 mediates nuclear export and degradation of CRTC2. In terms of processing, phosphorylation/dephosphorylation states of Ser-171 are required for regulating transduction of CREB activity. CRTCs/TORCs are inactive when phosphorylated, and active when dephosphorylated at this site. This primary site of phosphorylation, is regulated by cAMP and calcium levels and is dependent on the phosphorylation of SIKs (SIK1 and SIK2) by LKB1. Following adenylyl cyclase activation, dephosphorylated at Ser-171 by PPP3CA/calcineurin A resulting in CRTC2 dissociation from 14-3-3 proteins and PPP3CA. Both insulin and AMPK increase this phosphorylation of CRTC2 while glucagon suppresses it. Phosphorylation at Ser-274 by MARK2 is induced under low glucose conditions and dephosphorylated in response to glucose influx. Phosphorylation at Ser-274 promotes interaction with 14-3-3 proteins and translocation to the cytoplasm. Asymmetric dimethylation of arginine resisues by PRMT6 enhances the association of CRTC2 with CREB on the promoters of gluconeogenic genes.

It localises to the cytoplasm. The protein resides in the nucleus. Functionally, transcriptional coactivator for CREB1 which activates transcription through both consensus and variant cAMP response element (CRE) sites. Acts as a coactivator, in the SIK/TORC signaling pathway, being active when dephosphorylated and acts independently of CREB1 'Ser-133' phosphorylation. Enhances the interaction of CREB1 with TAF4. Regulates gluconeogenesis as a component of the LKB1/AMPK/TORC2 signaling pathway. Regulates the expression of specific genes such as the steroidogenic gene, StAR. Potent coactivator of PPARGC1A and inducer of mitochondrial biogenesis in muscle cells. The protein is CREB-regulated transcription coactivator 2 (CRTC2) of Bos taurus (Bovine).